A 414-amino-acid chain; its full sequence is MTEKLQPLRGMKDLLPDDYKVHDYIINKARDVGVLYGYKQMSTPIVEYTKVFNRSMGESSDVISKEIYSFLDKSNDFVALRPEFTACIIRSLISNRLQHKLPLKFFSTGPVFRYDRPQAGRQRQFHQLNYEYIGAKGAITDADTLKLAVDILKALEIEQDTTLELNSLGCNESRSVYQQKLVEYLNDFKDQLSEESKIRLSKNPMRILDSKSETDQKIIANAPVLSEYYTDESKEYFEELIQYLDILGVKYSINPRLVRGLDYYCHTAFEFTTKKLGSQSTILAGGRYDGLAKIMGNNDDVPAIGFAAGIERIALMREYNISEVKPVFVLPIGKNNICYALEIVDKLRTENIAIIIESLGKIAKRMQRIFNENAQFIIFIGDEEQANNNLKIKDLKKAEEYIVDFAKALELLKK.

This sequence belongs to the class-II aminoacyl-tRNA synthetase family. As to quaternary structure, homodimer.

The protein localises to the cytoplasm. It carries out the reaction tRNA(His) + L-histidine + ATP = L-histidyl-tRNA(His) + AMP + diphosphate + H(+). This Rickettsia conorii (strain ATCC VR-613 / Malish 7) protein is Histidine--tRNA ligase.